The sequence spans 177 residues: METSLRYGGDSKALKIHAKEKLRIDTNTFFQVRGGLDTKTGQPSSGSALIRHFYPNFSATLGVGVRYDKQDSVGVRYAKNDKLRYTVLAKKTFPVTNDGLVNFKIKGGCDVDQDFKEWKSRGGAEFSWNVFNFQKDQDVRLRIGYEAFEQVPYLQIRENNWTFNADYKGRWNVRYDL.

The Cytoplasmic segment spans residues M1 to K21. The chain crosses the membrane as a beta stranded span at residues L22–Q31. Residues V32–P55 are Chloroplast intermembrane-facing. The chain crosses the membrane as a beta stranded span at residues N56–V65. The Cytoplasmic segment spans residues R66 to D81. A beta stranded membrane pass occupies residues K82 to K91. The Chloroplast intermembrane segment spans residues T92 to N97. Residues D98–G107 form a beta stranded membrane-spanning segment. The Cytoplasmic portion of the chain corresponds to G108–S120. Residues R121–V130 form a beta stranded membrane-spanning segment. Residues F131 to Q137 are Chloroplast intermembrane-facing. The chain crosses the membrane as a beta stranded span at residues D138–A147. Residues F148–P152 are Cytoplasmic-facing. The chain crosses the membrane as a beta stranded span at residues Y153 to T162. Over F163–K168 the chain is Chloroplast intermembrane. Residues G169–L177 form a beta stranded membrane-spanning segment.

It belongs to the plastid outer envelope porin OEP21 (TC 1.B.29) family. As to expression, present in roots, shoots and leaves.

The protein resides in the plastid. It localises to the etioplast membrane. It is found in the chloroplast outer membrane. Functionally, voltage-dependent rectifying anion channel that facilitates the translocation between chloroplast and cytoplasm of phosphorylated carbohydrates such as triosephosphate, 3-phosphoglycerate and inorganic phosphate (Pi) depending of ATP to triosephosphate ratio in the plastidial intermembrane space; in high triosephosphate/ATP conditions (e.g. photosynthesis), export of triosphosphate from chloroplast (outward rectifying channels), but in high ATP/triosephosphate conditions (e.g. dark phase), import of phosphosolutes (inward rectifying channels). The polypeptide is Outer envelope pore protein 21, chloroplastic (OEP21) (Pisum sativum (Garden pea)).